Here is a 161-residue protein sequence, read N- to C-terminus: 2-C-methyl-D-erythritol 2,4-cyclodiphosphate synthase (161 aa).

A divalent metal cation-binding residues include Asp10 and His12. Residues 10–12 and 36–37 each bind 4-CDP-2-C-methyl-D-erythritol 2-phosphate; these read DVH and HS. An a divalent metal cation-binding site is contributed by His44. 4-CDP-2-C-methyl-D-erythritol 2-phosphate-binding positions include 58-60, 63-67, 102-108, 134-137, Phe141, and Arg144; these read DIG, FPDTD, AQAPKML, and TTTE.

The protein belongs to the IspF family. As to quaternary structure, homotrimer. It depends on a divalent metal cation as a cofactor.

It catalyses the reaction 4-CDP-2-C-methyl-D-erythritol 2-phosphate = 2-C-methyl-D-erythritol 2,4-cyclic diphosphate + CMP. It functions in the pathway isoprenoid biosynthesis; isopentenyl diphosphate biosynthesis via DXP pathway; isopentenyl diphosphate from 1-deoxy-D-xylulose 5-phosphate: step 4/6. Functionally, involved in the biosynthesis of isopentenyl diphosphate (IPP) and dimethylallyl diphosphate (DMAPP), two major building blocks of isoprenoid compounds. Catalyzes the conversion of 4-diphosphocytidyl-2-C-methyl-D-erythritol 2-phosphate (CDP-ME2P) to 2-C-methyl-D-erythritol 2,4-cyclodiphosphate (ME-CPP) with a corresponding release of cytidine 5-monophosphate (CMP). This Shewanella loihica (strain ATCC BAA-1088 / PV-4) protein is 2-C-methyl-D-erythritol 2,4-cyclodiphosphate synthase.